A 332-amino-acid chain; its full sequence is MSKVTVFGTGSFGTALANVLAENGHQVLMWGKNETTINEINEQHINSKYLKTAELNEDIEATLDIETAVAFADIYLMALPTKAMREVAQTIDSLLSSKKTFIHVAKGIENDTYKRVSEMLEDSISPKHNAGIGVLSGPSHAEEVVIKQPTTVAASSKSESVRQLTQDLFMNDYLRVYTNEDLVGVELGGALKNIIAVASGVISGMGFGDNAKAALMTRGLAEISRLGEKLGANPITFLGLGGIGDLIVTCTSTHSRNYTLGYKLGEGKSLDTALNEMNMVVEGVYTTKSVYHLSKEVNVDMPITTALYKVLFENRPVDESVKDLMGRGKKAE.

Positions 11, 12, 32, and 106 each coordinate NADPH. K106, G137, and S139 together coordinate sn-glycerol 3-phosphate. A141 provides a ligand contact to NADPH. K192, D245, S255, R256, and N257 together coordinate sn-glycerol 3-phosphate. The Proton acceptor role is filled by K192. R256 serves as a coordination point for NADPH. NADPH is bound by residues V280 and E282.

This sequence belongs to the NAD-dependent glycerol-3-phosphate dehydrogenase family.

The protein resides in the cytoplasm. It carries out the reaction sn-glycerol 3-phosphate + NAD(+) = dihydroxyacetone phosphate + NADH + H(+). The catalysed reaction is sn-glycerol 3-phosphate + NADP(+) = dihydroxyacetone phosphate + NADPH + H(+). Its pathway is membrane lipid metabolism; glycerophospholipid metabolism. Its function is as follows. Catalyzes the reduction of the glycolytic intermediate dihydroxyacetone phosphate (DHAP) to sn-glycerol 3-phosphate (G3P), the key precursor for phospholipid synthesis. This is Glycerol-3-phosphate dehydrogenase [NAD(P)+] from Staphylococcus saprophyticus subsp. saprophyticus (strain ATCC 15305 / DSM 20229 / NCIMB 8711 / NCTC 7292 / S-41).